The chain runs to 613 residues: Zinc metalloproteinase-disintegrin-like atragin (613 aa).

The signal sequence occupies residues methionine 1–serine 20. The propeptide occupies isoleucine 21–leucine 191. Positions lysine 205–proline 400 constitute a Peptidase M12B domain. Residues glutamate 208 and aspartate 292 each contribute to the Ca(2+) site. 2 disulfides stabilise this stretch: cysteine 316/cysteine 395 and cysteine 356/cysteine 379. Histidine 341, histidine 345, and histidine 351 together coordinate Zn(2+). Residues cysteine 395, asparagine 398, isoleucine 410, asparagine 413, phenylalanine 415, glutamate 417, glutamate 420, and aspartate 423 each coordinate Ca(2+). A Disintegrin domain is found at proline 408–asparagine 494. Disulfide bonds link cysteine 411-cysteine 440, cysteine 422-cysteine 435, cysteine 424-cysteine 430, cysteine 434-cysteine 457, cysteine 448-cysteine 454, cysteine 453-cysteine 479, cysteine 466-cysteine 486, cysteine 473-cysteine 505, cysteine 498-cysteine 510, cysteine 517-cysteine 567, cysteine 532-cysteine 575, cysteine 542-cysteine 577, cysteine 545-cysteine 555, cysteine 562-cysteine 601, and cysteine 595-cysteine 606. Residue asparagine 436 is glycosylated (N-linked (GlcNAc...) asparagine). Residues aspartate 472–aspartate 474 carry the D/ECD-tripeptide motif. Residues aspartate 474, leucine 475, glutamate 477, aspartate 489, and valine 490 each coordinate Ca(2+). Positions valine 560 to isoleucine 574 are hypervariable region that may play important roles toward cell migration.

It belongs to the venom metalloproteinase (M12B) family. P-III subfamily. P-IIIa sub-subfamily. In terms of assembly, monomer. Requires Zn(2+) as cofactor. Expressed by the venom gland.

The protein resides in the secreted. Its function is as follows. Snake venom zinc metalloproteinase that seems to inhibit cell migration. This activity is dominated by the local structure of the hyper-variable region. The chain is Zinc metalloproteinase-disintegrin-like atragin from Naja atra (Chinese cobra).